A 478-amino-acid chain; its full sequence is MSPKTETKASVGFKAGVKDYKLTYYTPDYETKDTDILAAFRVTPQPGVPPEEAGAAVAAESSTGTWTTVWTDGLTSLDRYKGRCYHIEPVAGEEDQYIAYVAYPLDLFEEGSVTNMFTSIVGNVFGFKALRALRLEDLRIPTAYVKTFQGPPHGIQVERDKLNKYGRPLLGCTIKPKLGLSAKNYGRAVYECLRGGLDFTKDDENVNSQPFMRWRDRFLFCAEALYKAQAETGEIKGHYLNATAGTCEEMMKRAVFARELGVPIVMHDYLTGGFTANTTLAHYCRDNGLLLHIHRAMHAVIDRQKNHGIHFRVLAKALRMSGGDHIHAGTVVGKLEGERDITLGFVDLLRDDFIQKDRSRGIYFTQDWVSMPGVLPVASGGIHVWHMPALTEIFGDDSVLQFGGGTLGHPWGNAPGAVANRVALEACVQARNEGRDLAREGNEIIREACKWSPELAAACEVWKEIKFEFKAVDTLDIL.

Positions 1–2 (MS) are excised as a propeptide. Residue proline 3 is modified to N-acetylproline. Lysine 14 is modified (N6,N6,N6-trimethyllysine). 2 residues coordinate substrate: asparagine 123 and threonine 173. Catalysis depends on lysine 175, which acts as the Proton acceptor. Lysine 177 provides a ligand contact to substrate. Lysine 201, aspartate 203, and glutamate 204 together coordinate Mg(2+). N6-carboxylysine is present on lysine 201. Histidine 294 (proton acceptor) is an active-site residue. Substrate-binding residues include arginine 295, histidine 327, and serine 379.

The protein belongs to the RuBisCO large chain family. Type I subfamily. Heterohexadecamer of 8 large chains and 8 small chains; disulfide-linked. The disulfide link is formed within the large subunit homodimers. It depends on Mg(2+) as a cofactor. In terms of processing, the disulfide bond which can form in the large chain dimeric partners within the hexadecamer appears to be associated with oxidative stress and protein turnover.

The protein resides in the plastid. It localises to the chloroplast. The enzyme catalyses 2 (2R)-3-phosphoglycerate + 2 H(+) = D-ribulose 1,5-bisphosphate + CO2 + H2O. The catalysed reaction is D-ribulose 1,5-bisphosphate + O2 = 2-phosphoglycolate + (2R)-3-phosphoglycerate + 2 H(+). In terms of biological role, ruBisCO catalyzes two reactions: the carboxylation of D-ribulose 1,5-bisphosphate, the primary event in carbon dioxide fixation, as well as the oxidative fragmentation of the pentose substrate in the photorespiration process. Both reactions occur simultaneously and in competition at the same active site. The protein is Ribulose bisphosphate carboxylase large chain of Drimys granadensis.